The chain runs to 665 residues: Fructose-1,6-bisphosphatase class 3 (665 aa).

This sequence belongs to the FBPase class 3 family. Mn(2+) serves as cofactor.

It carries out the reaction beta-D-fructose 1,6-bisphosphate + H2O = beta-D-fructose 6-phosphate + phosphate. The protein operates within carbohydrate biosynthesis; gluconeogenesis. The protein is Fructose-1,6-bisphosphatase class 3 of Clostridium novyi (strain NT).